Reading from the N-terminus, the 183-residue chain is Outer membrane protein H.8 (183 aa).

The first 17 residues, Met1–Ala17, serve as a signal peptide directing secretion. Residue Cys18 is the site of N-palmitoyl cysteine attachment. Cys18 is lipidated: S-diacylglycerol cysteine. Positions Ala27 to Ala51 are disordered. One can recognise a Plastocyanin-like domain in the interval Gly57–Asp183. Cu cation-binding residues include His102, Cys166, His171, and Met175.

It depends on Cu cation as a cofactor.

It localises to the cell outer membrane. This chain is Outer membrane protein H.8, found in Neisseria meningitidis serogroup B (strain ATCC BAA-335 / MC58).